Consider the following 239-residue polypeptide: C-8 sterol isomerase erg2 (239 aa).

N-linked (GlcNAc...) asparagine glycosylation occurs at N11. The chain crosses the membrane as a helical span at residues 27-47 (KFGFLAVFVAIFAALYSYLDA). N73 carries N-linked (GlcNAc...) asparagine glycosylation.

This sequence belongs to the ERG2 family.

Its subcellular location is the endoplasmic reticulum membrane. It catalyses the reaction fecosterol = episterol. It participates in steroid metabolism; ergosterol biosynthesis. In terms of biological role, C-8 sterol isomerase; part of the third module of ergosterol biosynthesis pathway that includes the late steps of the pathway. Erg2 catalyzes the reaction which results in unsaturation at C-7 in the B ring of sterols and thus converts fecosterol to episterol. The third module or late pathway involves the ergosterol synthesis itself through consecutive reactions that mainly occur in the endoplasmic reticulum (ER) membrane. Firstly, the squalene synthase erg9 catalyzes the condensation of 2 farnesyl pyrophosphate moieties to form squalene, which is the precursor of all steroids. Squalene synthase is crucial for balancing the incorporation of farnesyl diphosphate (FPP) into sterol and nonsterol isoprene synthesis. Secondly, squalene is converted into lanosterol by the consecutive action of the squalene epoxidase erg1 and the lanosterol synthase erg7. Then, the delta(24)-sterol C-methyltransferase erg6 methylates lanosterol at C-24 to produce eburicol. Eburicol is the substrate of the sterol 14-alpha demethylase encoded by cyp51A and cyp51B, to yield 4,4,24-trimethyl ergosta-8,14,24(28)-trienol. The C-14 reductase erg24 then reduces the C14=C15 double bond which leads to 4,4-dimethylfecosterol. A sequence of further demethylations at C-4, involving the C-4 demethylation complex containing the C-4 methylsterol oxidases erg25A or erg25B, the sterol-4-alpha-carboxylate 3-dehydrogenase erg26 and the 3-keto-steroid reductase erg27, leads to the production of fecosterol via 4-methylfecosterol. The C-8 sterol isomerase erg2 then catalyzes the reaction which results in unsaturation at C-7 in the B ring of sterols and thus converts fecosterol to episterol. The sterol-C5-desaturase erg3B then catalyzes the introduction of a C-5 double bond in the B ring to produce 5-dehydroepisterol. The 2 other sterol-C5-desaturases, erg3A and erg3C, seem to be less important in ergosterol biosynthesis. The C-22 sterol desaturase erg5 further converts 5-dehydroepisterol into ergosta-5,7,22,24(28)-tetraen-3beta-ol by forming the C-22(23) double bond in the sterol side chain. Finally, ergosta-5,7,22,24(28)-tetraen-3beta-ol is substrate of the C-24(28) sterol reductases erg4A and erg4B to produce ergosterol. Possible alternative sterol biosynthetic pathways might exist from fecosterol to ergosterol, depending on the activities of the erg3 isoforms. This Aspergillus fumigatus (strain ATCC MYA-4609 / CBS 101355 / FGSC A1100 / Af293) (Neosartorya fumigata) protein is C-8 sterol isomerase erg2.